The sequence spans 594 residues: UvrABC system protein C (594 aa).

Residues 14-91 (DQPGCYLMKD…IKKYDPKYNI (78 aa)) enclose the GIY-YIG domain. The UVR domain maps to 196-231 (KEVRSELEIKMYEASEKLEFERAKELRDQIAHIDAI).

This sequence belongs to the UvrC family. In terms of assembly, interacts with UvrB in an incision complex.

It is found in the cytoplasm. The UvrABC repair system catalyzes the recognition and processing of DNA lesions. UvrC both incises the 5' and 3' sides of the lesion. The N-terminal half is responsible for the 3' incision and the C-terminal half is responsible for the 5' incision. The sequence is that of UvrABC system protein C from Bacillus cereus (strain G9842).